Here is a 316-residue protein sequence, read N- to C-terminus: UDP-N-acetylenolpyruvoylglucosamine reductase (316 aa).

In terms of domain architecture, FAD-binding PCMH-type spans 27 to 225 (VGGKAERFYR…KTAINALLKK (199 aa)). Residue R190 is part of the active site. S239 serves as the catalytic Proton donor. E309 is an active-site residue.

The protein belongs to the MurB family. FAD is required as a cofactor.

The protein resides in the cytoplasm. The enzyme catalyses UDP-N-acetyl-alpha-D-muramate + NADP(+) = UDP-N-acetyl-3-O-(1-carboxyvinyl)-alpha-D-glucosamine + NADPH + H(+). The protein operates within cell wall biogenesis; peptidoglycan biosynthesis. Functionally, cell wall formation. This Coxiella burnetii (strain CbuG_Q212) (Coxiella burnetii (strain Q212)) protein is UDP-N-acetylenolpyruvoylglucosamine reductase.